The following is a 1153-amino-acid chain: Integrin alpha-M (1153 aa).

Residues methionine 1–glycine 16 form the signal peptide. The Extracellular segment spans residues phenylalanine 17 to asparagine 1105. FG-GAP repeat units lie at residues asparagine 18–proline 75 and isoleucine 76–glutamine 135. The N-linked (GlcNAc...) asparagine glycan is linked to asparagine 58. The cysteines at positions 66 and 73 are disulfide-linked. Asparagine 86 is a glycosylation site (N-linked (GlcNAc...) asparagine). A disulfide bridge links cysteine 105 with cysteine 123. A VWFA domain is found at isoleucine 164–threonine 338. FG-GAP repeat units lie at residues glutamine 339 to isoleucine 390, asparagine 391 to tryptophan 442, glutamate 443 to tryptophan 503, glutamate 506 to serine 564, and histidine 569 to lysine 629. N-linked (GlcNAc...) asparagine glycosylation occurs at asparagine 391. Ca(2+) is bound by residues aspartate 465, aspartate 467, aspartate 469, asparagine 471, asparagine 473, aspartate 529, asparagine 531, aspartate 533, aspartate 537, aspartate 592, aspartate 596, and aspartate 600. Residues cysteine 654 and cysteine 711 are joined by a disulfide bond. Asparagine 696, asparagine 734, asparagine 772, asparagine 801, asparagine 881, asparagine 907, asparagine 941, asparagine 980, asparagine 994, and asparagine 1022 each carry an N-linked (GlcNAc...) asparagine glycan. The cysteines at positions 770 and 776 are disulfide-linked. 2 disulfides stabilise this stretch: cysteine 999-cysteine 1023 and cysteine 1028-cysteine 1033. N-linked (GlcNAc...) asparagine glycosylation is found at asparagine 1045, asparagine 1051, and asparagine 1076. A helical transmembrane segment spans residues proline 1106–tyrosine 1129. The Cytoplasmic segment spans residues lysine 1130–glutamine 1153. Positions glycine 1132–arginine 1136 match the GFFKR motif motif.

It belongs to the integrin alpha chain family. In terms of assembly, heterodimer of an alpha and a beta subunit. ITGAM associates with ITGB2. Found in a complex with CD177 and ITGB2/CD18. Interacts with JAM3. Interacts with THBD. Interacts with complement factor H/CFH; this interaction mediates adhesion of neutrophils to pathogens leading to pathogen clearance. Interacts with TMEM268; this interaction inhibits ITGAM degradation via the endosome-lysosome pathway. Predominantly expressed in monocytes and granulocytes. Expressed in a subset of peritoneal mast cells. Expressed in microglia (at protein level).

Its subcellular location is the cell membrane. It localises to the membrane raft. Functionally, integrin ITGAM/ITGB2 is implicated in various adhesive interactions of monocytes, macrophages and granulocytes as well as in mediating the uptake of complement-coated particles and pathogens. It is identical with CR-3, the receptor for the iC3b fragment of the third complement component. It probably recognizes the R-G-D peptide in C3b. Integrin ITGAM/ITGB2 is also a receptor for fibrinogen, factor X and ICAM1. It recognizes P1 and P2 peptides of fibrinogen gamma chain. Regulates neutrophil migration. In association with beta subunit ITGB2/CD18, required for CD177-PRTN3-mediated activation of TNF primed neutrophils. May regulate phagocytosis-induced apoptosis in extravasated neutrophils. May play a role in mast cell development. Required with TYROBP/DAP12 in microglia to control production of microglial superoxide ions which promote the neuronal apoptosis that occurs during brain development. In Mus musculus (Mouse), this protein is Integrin alpha-M (Itgam).